Consider the following 149-residue polypeptide: Transcriptional regulator MraZ (149 aa).

SpoVT-AbrB domains are found at residues 7–54 (KYVN…GISH) and 83–126 (AVQL…QPQN).

This sequence belongs to the MraZ family. Forms oligomers.

Its subcellular location is the cytoplasm. The protein localises to the nucleoid. The protein is Transcriptional regulator MraZ of Rickettsia rickettsii (strain Sheila Smith).